Reading from the N-terminus, the 689-residue chain is DNA ligase (689 aa).

Residues 40-44, 89-90, and Glu-121 contribute to the NAD(+) site; these read DSEYD and SL. The active-site N6-AMP-lysine intermediate is Lys-123. NAD(+)-binding residues include Arg-144, Glu-179, Lys-295, and Lys-319. The Zn(2+) site is built by Cys-413, Cys-416, Cys-431, and Cys-437. Residues 610–689 form the BRCT domain; the sequence is REQNILTGKI…VEWLAFIKNA (80 aa).

The protein belongs to the NAD-dependent DNA ligase family. LigA subfamily. Requires Mg(2+) as cofactor. It depends on Mn(2+) as a cofactor.

It catalyses the reaction NAD(+) + (deoxyribonucleotide)n-3'-hydroxyl + 5'-phospho-(deoxyribonucleotide)m = (deoxyribonucleotide)n+m + AMP + beta-nicotinamide D-nucleotide.. DNA ligase that catalyzes the formation of phosphodiester linkages between 5'-phosphoryl and 3'-hydroxyl groups in double-stranded DNA using NAD as a coenzyme and as the energy source for the reaction. It is essential for DNA replication and repair of damaged DNA. The polypeptide is DNA ligase (Rickettsia prowazekii (strain Madrid E)).